The sequence spans 159 residues: Ribosomal RNA large subunit methyltransferase H (159 aa).

S-adenosyl-L-methionine contacts are provided by residues leucine 76, glycine 108, and 127–132 (FSKMTF).

Belongs to the RNA methyltransferase RlmH family. Homodimer.

It is found in the cytoplasm. The catalysed reaction is pseudouridine(1915) in 23S rRNA + S-adenosyl-L-methionine = N(3)-methylpseudouridine(1915) in 23S rRNA + S-adenosyl-L-homocysteine + H(+). Specifically methylates the pseudouridine at position 1915 (m3Psi1915) in 23S rRNA. The polypeptide is Ribosomal RNA large subunit methyltransferase H (Bifidobacterium longum subsp. infantis (strain ATCC 15697 / DSM 20088 / JCM 1222 / NCTC 11817 / S12)).